The primary structure comprises 25 residues: M-poneritoxin-Na1b (25 aa).

It belongs to the non-disulfide-bridged peptide (NDBP) superfamily. Medium-length antimicrobial peptide (group 3) family. Ponericin-W subfamily. Expressed by the venom gland.

It is found in the secreted. The protein localises to the target cell membrane. Its function is as follows. Membrane-perturbating peptide with multiple activities. It is insecticidal, since it induces reversible paralysis in insects (L.cuprina) after 1 hour, but fails to kill flies. It shows a relatively strong and broad-spectrum antibacterial activity against both Gram-positive and Gram-negative bacteria (MIC&lt;20 uM). It is also anthelmintic, since it potently inhibits the larval development of the major pathogenic nematode of ruminants (H.contortus, IC(50)=2.8 uM). Interestingly, only at 10 uM, it increases adult males motility of the other nematode B.malayi for 24 hours post-treatment, followed by a reduction in motility for the rest of the experiment. It shows cytotoxic activity against HEK293 cells (EC(50)=4-6 uM) and induces hemolysis in human erythrocytes (EC(50)=40-62 uM). In addition, it causes an important increase in intracellular calcium concentration on neuronal and epithelial cell lines, which supports a non-specific membrane perturbation mechanism of action. In vivo, it induces pain by intraplantar injection into mice, suggesting a defensive function against vertebrate predators. The chain is M-poneritoxin-Na1b from Neoponera apicalis (Ant).